We begin with the raw amino-acid sequence, 562 residues long: 3-hydroxy-3-methylglutaryl-coenzyme A reductase 2 (562 aa).

The next 2 membrane-spanning stretches (helical) occupy residues 32 to 56 (ALPL…YFLL) and 77 to 100 (ICAL…DLIF). The tract at residues 101–146 (RSSSDDDVWVNDGMIPCNQSLDCREVLPIKPNSVDPPRESELDSVE) is linker. The N-linked (GlcNAc...) asparagine glycan is linked to N118. The catalytic stretch occupies residues 147-562 (DEEIVKLVID…DIGPSSQVNR (416 aa)). Catalysis depends on E240, which acts as the Charge relay system. N304 is a glycosylation site (N-linked (GlcNAc...) asparagine). Active-site charge relay system residues include K372 and D448. The Proton donor role is filled by H544. N-linked (GlcNAc...) asparagine glycosylation is present at N548. The residue at position 550 (S550) is a Phosphoserine.

It belongs to the HMG-CoA reductase family. As to expression, restricted to young seedlings, roots, and inflorescences. Expressed in root tips, shoot apex, secretory zone of the stigma, microspores, mature pollen grains, gynoecium vascular tissue and fertilized ovules.

It localises to the endoplasmic reticulum membrane. The catalysed reaction is (R)-mevalonate + 2 NADP(+) + CoA = (3S)-3-hydroxy-3-methylglutaryl-CoA + 2 NADPH + 2 H(+). It participates in metabolic intermediate biosynthesis; (R)-mevalonate biosynthesis; (R)-mevalonate from acetyl-CoA: step 3/3. Regulated at the post-translational level in response to alterations of the sphingolipid and the sterol biosynthetic pathways. In terms of biological role, catalyzes the synthesis of mevalonate. The specific precursor of all isoprenoid compounds present in plants. The sequence is that of 3-hydroxy-3-methylglutaryl-coenzyme A reductase 2 (HMG2) from Arabidopsis thaliana (Mouse-ear cress).